A 410-amino-acid polypeptide reads, in one-letter code: Eukaryotic initiation factor 4A (410 aa).

The short motif at 37–65 (ESFDSMGLQENLLRGIYAYGFEKPSAIQQ) is the Q motif element. Positions 68–238 (IVPFCKGLDV…RKFMNKPVRI (171 aa)) constitute a Helicase ATP-binding domain. 81–88 (AQSGTGKT) contributes to the ATP binding site. Positions 186–189 (DEAD) match the DEAD box motif. One can recognise a Helicase C-terminal domain in the interval 249 to 410 (GIKQFYVNID…ELPANVADLL (162 aa)).

It belongs to the DEAD box helicase family. eIF4A subfamily. In terms of assembly, eIF4F is a multi-subunit complex, the composition of which varies with external and internal environmental conditions. It is composed of at least EIF4A, EIF4E and EIF4G.

The enzyme catalyses ATP + H2O = ADP + phosphate + H(+). Its function is as follows. ATP-dependent RNA helicase which is a subunit of the eIF4F complex involved in cap recognition and is required for mRNA binding to ribosome. In the current model of translation initiation, eIF4A unwinds RNA secondary structures in the 5'-UTR of mRNAs which is necessary to allow efficient binding of the small ribosomal subunit, and subsequent scanning for the initiator codon. The sequence is that of Eukaryotic initiation factor 4A from Zea mays (Maize).